Reading from the N-terminus, the 463-residue chain is MAQVSINRDLGEWGLSTDSGERARLLQSPSVDIAPKSEGEAPPGGVGGGTTSTLGAIFIVVNACLGAGLLNFPAAFSTAGGVAAGITLQMAMLVFIISGLVILAYCSQASNERTYQEVVWAVCGKLTGVLCEVAIATYTFGTCIAFLIIIGDQQDKIIAVMAKEPEGPGGSPWYTDRKFTISLTAFLFILPLSIPREIGFQKYASFLSVVGTWYVTAIIIIKYIWPDKEMTPADILNRPASWIAVFNAMPTICFGFQCHVSSVPVFNSMRQPEVKTWGGVVTAAMVIALAVYMGTGICGFLTFGDAVDPDVLLSYPSEDMAVAVARAFIILSVLTSYPILHFCGRAVIEGLWLRYQGMPVEEDVGRERRRRVLQTLVWFLLTLLLALFIPDIGKVISVIGGLAACFIFVFPGLCLIQAKLSEMEEVKPASWWAMVSYGVLLVTLGAFIFGQTTANAIFVDLLA.

Residue serine 28 is modified to Phosphoserine. A run of 11 helical transmembrane segments spans residues 56–76 (AIFIVVNACLGAGLLNFPAAF), 82–102 (VAAGITLQMAMLVFIISGLVI), 130–150 (LCEVAIATYTFGTCIAFLIII), 179–199 (FTISLTAFLFILPLSIPREIG), 206–226 (FLSVVGTWYVTAIIIIKYIWP), 240–260 (ASWIAVFNAMPTICFGFQCHV), 283–303 (AAMVIALAVYMGTGICGFLTF), 320–340 (MAVAVARAFIILSVLTSYPIL), 372–392 (VLQTLVWFLLTLLLALFIPDI), 396–416 (ISVIGGLAACFIFVFPGLCLI), and 429–449 (ASWWAMVSYGVLLVTLGAFIF).

It belongs to the amino acid/polyamine transporter 2 family. In terms of assembly, interacts with the mTORC1 complex; this interaction mediates the recruitment of mTORC1 to the lysosome and its subsequent activation.

The protein localises to the lysosome membrane. It is found in the cell projection. The protein resides in the axon. It carries out the reaction L-asparagine(in) + Na(+)(in) = L-asparagine(out) + Na(+)(out). It catalyses the reaction L-glutamine(in) + Na(+)(in) = L-glutamine(out) + Na(+)(out). In terms of biological role, symporter that selectively cotransports sodium ions and amino acids, such as L-glutamine and L-asparagine from the lysosome into the cytoplasm and may participates in mTORC1 activation. The transport activity requires an acidic lysosomal lumen. This is Sodium-coupled neutral amino acid transporter 7 from Bos taurus (Bovine).